The chain runs to 275 residues: Hydroxyethylthiazole kinase (275 aa).

Met-50 is a substrate binding site. 2 residues coordinate ATP: Arg-126 and Ser-171. Ala-200 lines the substrate pocket.

Belongs to the Thz kinase family. Requires Mg(2+) as cofactor.

The enzyme catalyses 5-(2-hydroxyethyl)-4-methylthiazole + ATP = 4-methyl-5-(2-phosphooxyethyl)-thiazole + ADP + H(+). Its pathway is cofactor biosynthesis; thiamine diphosphate biosynthesis; 4-methyl-5-(2-phosphoethyl)-thiazole from 5-(2-hydroxyethyl)-4-methylthiazole: step 1/1. Functionally, catalyzes the phosphorylation of the hydroxyl group of 4-methyl-5-beta-hydroxyethylthiazole (THZ). The sequence is that of Hydroxyethylthiazole kinase from Acinetobacter baumannii (strain SDF).